A 291-amino-acid chain; its full sequence is Serine hydrolase BPHL (291 aa).

The first 37 residues, 1–37 (MVAVLGGRGVLRLRLLLSALKPGIHVPRAGPAAAFGT), serve as a signal peptide directing secretion. Positions 62–181 (AVLLLPGMLG…DSMIYEGIRD (120 aa)) constitute an AB hydrolase-1 domain. N6-acetyllysine occurs at positions 86 and 119. The residue at position 126 (Lys-126) is an N6-acetyllysine; alternate. Lys-126 carries the N6-succinyllysine; alternate modification. Ser-139 (nucleophile) is an active-site residue. Lys-184 is modified (N6-succinyllysine). Lys-191 carries the post-translational modification N6-acetyllysine; alternate. Position 191 is an N6-succinyllysine; alternate (Lys-191). Lys-217 carries the N6-acetyllysine modification. Asp-221 lines the Mg(2+) pocket. Lys-243 is modified (N6-acetyllysine). Asp-244 serves as the catalytic Charge relay system. N6-acetyllysine; alternate is present on residues Lys-260 and Lys-271. N6-succinyllysine; alternate occurs at positions 260 and 271. Catalysis depends on His-272, which acts as the Charge relay system.

This sequence belongs to the AB hydrolase superfamily. Lipase family. Monomer. May also form homodimers. As to expression, expressed at high levels in liver and kidney and lower levels in heart, intestine and skeletal muscle.

It is found in the mitochondrion. The enzyme catalyses L-homocysteine thiolactone + H2O = L-homocysteine + H(+). It carries out the reaction valacyclovir + H2O = acyclovir + L-valine + H(+). Specific alpha-amino acid ester serine hydrolase that prefers small, hydrophobic, and aromatic side chains and does not have a stringent requirement for the leaving group other than preferring a primary alcohol. Has homocysteine-thiolactonase activity (in vitro) and may play a significant role in the detoxification of homocysteine thiolactone in vivo. Catalyzes the hydrolytic activation of amino acid ester prodrugs of nucleoside analogs such as valacyclovir and valganciclovir, converting them into their active forms (acyclovir and ganciclovir). This chain is Serine hydrolase BPHL (BPHL), found in Homo sapiens (Human).